Here is a 272-residue protein sequence, read N- to C-terminus: NH(3)-dependent NAD(+) synthetase (272 aa).

45-52 (GISGGQDS) provides a ligand contact to ATP. D51 is a Mg(2+) binding site. R138 is a binding site for deamido-NAD(+). Position 158 (T158) interacts with ATP. E163 is a binding site for Mg(2+). K171 and D178 together coordinate deamido-NAD(+). ATP is bound by residues K187 and T209. A deamido-NAD(+)-binding site is contributed by 258–259 (HK).

Belongs to the NAD synthetase family. In terms of assembly, homodimer.

It catalyses the reaction deamido-NAD(+) + NH4(+) + ATP = AMP + diphosphate + NAD(+) + H(+). Its pathway is cofactor biosynthesis; NAD(+) biosynthesis; NAD(+) from deamido-NAD(+) (ammonia route): step 1/1. In terms of biological role, catalyzes the ATP-dependent amidation of deamido-NAD to form NAD. Uses ammonia as a nitrogen source. This Bacillus thuringiensis subsp. konkukian (strain 97-27) protein is NH(3)-dependent NAD(+) synthetase.